Consider the following 476-residue polypeptide: Serine/threonine-protein kinase PknF (476 aa).

The Protein kinase domain maps to 12–279 (FTIVRQLGSG…FARALGHRLG (268 aa)). Residues 18–26 (LGSGGMGEV) and K41 each bind ATP. D137 acts as the Proton acceptor in catalysis. A helical transmembrane segment spans residues 306–326 (TAVIVPAVLAMLLVMAVAVAV). A disordered region spans residues 332–376 (ADDERAAQPARTRTTTSAGTTTSVAPASTTRPAPTTPTTTGAADT). Positions 338–376 (AQPARTRTTTSAGTTTSVAPASTTRPAPTTPTTTGAADT) are enriched in low complexity.

The protein belongs to the protein kinase superfamily. Ser/Thr protein kinase family. In terms of processing, autophosphorylated. Dephosphorylated by PstP.

Its subcellular location is the cell membrane. The enzyme catalyses L-seryl-[protein] + ATP = O-phospho-L-seryl-[protein] + ADP + H(+). The catalysed reaction is L-threonyl-[protein] + ATP = O-phospho-L-threonyl-[protein] + ADP + H(+). In terms of biological role, a serine/threonine-protein kinase, acts on HupB in vitro. This is Serine/threonine-protein kinase PknF from Mycobacterium tuberculosis (strain ATCC 25177 / H37Ra).